Here is a 430-residue protein sequence, read N- to C-terminus: Transcobalamin-2 (430 aa).

The first 18 residues, 1-18 (MELLKALLLLSGVFGALA), serve as a signal peptide directing secretion. 3 disulfides stabilise this stretch: Cys21-Cys270, Cys116-Cys312, and Cys165-Cys208. Cob(II)alamin contacts are provided by residues 152-156 (TNYYQ), His193, 193-197 (HVSVD), Asn245, Ser248, Gln294, and 398-400 (WQL).

This sequence belongs to the eukaryotic cobalamin transport proteins family. Interacts with CD320 (via LDL-receptor class A domains).

Its subcellular location is the secreted. Functionally, primary vitamin B12-binding and transport protein. Delivers cobalamin to cells. In Mus musculus (Mouse), this protein is Transcobalamin-2 (Tcn2).